The primary structure comprises 98 residues: Large ribosomal subunit protein bL28 (98 aa).

It belongs to the bacterial ribosomal protein bL28 family.

In Chelativorans sp. (strain BNC1), this protein is Large ribosomal subunit protein bL28.